Here is a 309-residue protein sequence, read N- to C-terminus: Epidermal retinol dehydrogenase 2 (309 aa).

The helical transmembrane segment at 11–31 threads the bilayer; sequence LFIFLGKSLFSLLEAMIFALL. 44–68 provides a ligand contact to NADP(+); that stretch reads LITGAGSGLGRLLALQFARLGSVLV. Substrate is bound at residue Ser-177. Catalysis depends on Tyr-190, which acts as the Proton acceptor. Residues 270–290 form a helical membrane-spanning segment; sequence LLYFMMFLKSFLPLKTGLLIA.

Belongs to the short-chain dehydrogenases/reductases (SDR) family. Detected in adult lung. Detected at low levels in adult brain, heart, testis, placenta, cervix, pancreas, uterus, stomach, rectum, small intestine, colon, esophagus, thymus, skin, and skin keratinocyte. Expression is higher in psoriasis lesions relative to unaffected skin from psoriasis patients. Detected in fetal kidney, skin and lung.

It localises to the endoplasmic reticulum membrane. The enzyme catalyses all-trans-retinol--[retinol-binding protein] + NAD(+) = all-trans-retinal--[retinol-binding protein] + NADH + H(+). The protein operates within cofactor metabolism; retinol metabolism. Functionally, oxidoreductase with strong preference for NAD. Active in both the oxidative and reductive directions. Oxidizes all-trans-retinol in all-trans-retinaldehyde. No activity was detected with 11-cis-retinol or 11-cis-retinaldehyde as substrates with either NAD(+)/NADH or NADP(+)/NADPH. The sequence is that of Epidermal retinol dehydrogenase 2 from Homo sapiens (Human).